The sequence spans 158 residues: Secreted frizzled-related protein 1 (158 aa).

Residues 1–34 (VRDSCEPVMQFFGFYWPEMLKCDKFPEGDVCIAM) form the FZ domain. N38 carries N-linked (GlcNAc...) asparagine glycosylation. 2 disulfides stabilise this stretch: C51–C121 and C68–C123. The NTR domain occupies 51–158 (CPPCDNELKS…IHKWDKKNKE (108 aa)).

It belongs to the secreted frizzled-related protein (sFRP) family. In terms of assembly, interacts with WNT4, WNT1, WNT2, WNT8, MYOC and FRZD6.

The protein localises to the secreted. Soluble frizzled-related proteins (sFRPS) function as modulators of Wnt signaling through direct interaction with Wnts. They have a role in regulating cell growth and differentiation in specific cell types. SFRP1 decreases intracellular beta-catenin levels. Has antiproliferative effects on vascular cells, in vitro and in vivo, and can induce, in vivo, an angiogenic response. In vascular cell cycle, delays the G1 phase and entry into the S phase. In kidney development, inhibits tubule formation and bud growth in metanephroi. Inhibits WNT1/WNT4-mediated TCF-dependent transcription. The polypeptide is Secreted frizzled-related protein 1 (Sfrp1) (Rattus norvegicus (Rat)).